The chain runs to 684 residues: Glycine--tRNA ligase beta subunit (684 aa).

The protein belongs to the class-II aminoacyl-tRNA synthetase family. In terms of assembly, tetramer of two alpha and two beta subunits.

Its subcellular location is the cytoplasm. It carries out the reaction tRNA(Gly) + glycine + ATP = glycyl-tRNA(Gly) + AMP + diphosphate. This chain is Glycine--tRNA ligase beta subunit, found in Pseudomonas savastanoi pv. phaseolicola (strain 1448A / Race 6) (Pseudomonas syringae pv. phaseolicola (strain 1448A / Race 6)).